A 214-amino-acid chain; its full sequence is GTP-binding nuclear protein GSP1/Ran (214 aa).

The 165-residue stretch at glutamate 4–asparagine 168 folds into the Small GTPase Ran-type domain. Position 15–22 (aspartate 15–threonine 22) interacts with GTP. A switch-I region spans residues lysine 34–valine 42. Residues glycine 65, asparagine 119–aspartate 122, and serine 147–lysine 149 each bind GTP. A switch-II region spans residues glycine 65–glutamine 81.

Belongs to the small GTPase superfamily. Ran family. In terms of assembly, found in a nuclear export complex with RanGTP, exportin and pre-miRNA.

It is found in the nucleus. Functionally, GTP-binding protein involved in nucleocytoplasmic transport. Required for the import of protein into the nucleus and also for RNA export. Involved in chromatin condensation and control of cell cycle. The protein is GTP-binding nuclear protein GSP1/Ran (GSP1) of Eremothecium gossypii (strain ATCC 10895 / CBS 109.51 / FGSC 9923 / NRRL Y-1056) (Yeast).